A 363-amino-acid polypeptide reads, in one-letter code: Probable L-tyrosine/L-aspartate decarboxylase (363 aa).

K208 bears the N6-(pyridoxal phosphate)lysine mark.

The protein belongs to the group II decarboxylase family. MfnA subfamily. Requires pyridoxal 5'-phosphate as cofactor.

It catalyses the reaction L-tyrosine + H(+) = tyramine + CO2. The enzyme catalyses L-aspartate + H(+) = beta-alanine + CO2. Its pathway is cofactor biosynthesis; methanofuran biosynthesis. It participates in cofactor biosynthesis; coenzyme A biosynthesis. In terms of biological role, catalyzes the decarboxylation of L-tyrosine to produce tyramine for methanofuran biosynthesis. Can also catalyze the decarboxylation of L-aspartate to produce beta-alanine for coenzyme A (CoA) biosynthesis. This chain is Probable L-tyrosine/L-aspartate decarboxylase, found in Methanothermobacter thermautotrophicus (strain ATCC 29096 / DSM 1053 / JCM 10044 / NBRC 100330 / Delta H) (Methanobacterium thermoautotrophicum).